The primary structure comprises 156 residues: Ribonuclease pancreatic (156 aa).

The first 28 residues, 1–28, serve as a signal peptide directing secretion; sequence MALEKSLALLPLLVLVLLVLGWVQPSLG. Residues 33 to 43 are compositionally biased toward basic and acidic residues; sequence AKKFQRQHMDS. Residues 33–52 form a disordered region; it reads AKKFQRQHMDSDGSPSSNPT. Lysine 35 and arginine 38 together coordinate substrate. Histidine 40 serves as the catalytic Proton acceptor. 4 cysteine pairs are disulfide-bonded: cysteine 54-cysteine 112, cysteine 68-cysteine 123, cysteine 86-cysteine 138, and cysteine 93-cysteine 100. N-linked (GlcNAc...) asparagine glycosylation occurs at asparagine 62. Residues 69-73, lysine 94, and arginine 113 each bind substrate; that span reads KPVNT. Residue asparagine 116 is glycosylated (N-linked (GlcNAc...) asparagine). Histidine 147 functions as the Proton donor in the catalytic mechanism.

This sequence belongs to the pancreatic ribonuclease family. Monomer. Interacts with and forms tight 1:1 complexes with RNH1. Dimerization of two such complexes may occur. Interaction with RNH1 inhibits this protein.

It localises to the secreted. The enzyme catalyses an [RNA] containing cytidine + H2O = an [RNA]-3'-cytidine-3'-phosphate + a 5'-hydroxy-ribonucleotide-3'-[RNA].. It catalyses the reaction an [RNA] containing uridine + H2O = an [RNA]-3'-uridine-3'-phosphate + a 5'-hydroxy-ribonucleotide-3'-[RNA].. Functionally, endonuclease that catalyzes the cleavage of RNA on the 3' side of pyrimidine nucleotides. Acts on single-stranded and double-stranded RNA. The polypeptide is Ribonuclease pancreatic (RNASE1) (Saimiri sciureus (Common squirrel monkey)).